Reading from the N-terminus, the 1492-residue chain is Condensin-2 complex subunit D3-L (1492 aa).

The interval 152–201 (WPRDPNASRKRKKDTLKSSQGDNRGGRKRPRPPRRDEQEMEDLSEEEQDE) is disordered. The span at 189-201 (QEMEDLSEEEQDE) shows a compositional bias: acidic residues. HEAT repeat units follow at residues 543 to 581 (SSDG…CHLI), 583 to 619 (CSSE…AQPH), and 621 to 659 (VLIQ…QSIT). Disordered regions lie at residues 1269 to 1345 (QLER…PRPR), 1359 to 1406 (RKAA…SLVG), and 1454 to 1492 (IMSP…KPSN). The span at 1277–1290 (NVQNPPSAESTGSP) shows a compositional bias: polar residues. Low complexity predominate over residues 1377–1388 (PSTPSPARTTSS).

In terms of assembly, component of the condensin-2 complex, which contains the smc2 and smc4 heterodimer, and three non SMC subunits, ncapg2, ncaph2 and ncapd3 that probably regulate the complex.

It localises to the nucleus. Functionally, regulatory subunit of the condensin-2 complex, a complex which establishes mitotic chromosome architecture and is involved in physical rigidity of the chromatid axis. This is Condensin-2 complex subunit D3-L from Xenopus laevis (African clawed frog).